Here is a 501-residue protein sequence, read N- to C-terminus: Aldehyde dehydrogenase 1A1 (501 aa).

Ser-2 carries the N-acetylserine modification. N6-acetyllysine occurs at positions 91 and 128. Residues 167-170 (IPWN), 193-196 (KPAE), 226-227 (GP), and 246-247 (GS) contribute to the NAD(+) site. The residue at position 252 (Lys-252) is an N6-acetyllysine. Glu-269 acts as the Proton acceptor in catalysis. Residue 269–271 (ELG) participates in NAD(+) binding. Cys-303 acts as the Nucleophile in catalysis. Residues 336 to 501 (LTPGINQGPQ…VAMKISQKNS (166 aa)) form a mediates interaction with PRMT3 region. Position 337 is a phosphothreonine (Thr-337). 349 to 353 (EQHDK) is an NAD(+) binding site. N6-acetyllysine is present on residues Lys-353 and Lys-367. 400–402 (EIF) contacts NAD(+). Lys-410 carries the post-translational modification N6-acetyllysine. Ser-413 carries the phosphoserine modification. Residues Lys-419, Lys-435, and Lys-495 each carry the N6-acetyllysine modification.

It belongs to the aldehyde dehydrogenase family. Homotetramer. Interacts with PRMT3; the interaction is direct, inhibits ALDH1A1 aldehyde dehydrogenase activity and is independent of the methyltransferase activity of PRMT3. Post-translationally, the N-terminus is blocked most probably by acetylation. As to expression, expressed in retina. Expressed in lens and cornea (at protein level). Expressed by midbrain dopamine neurons.

Its subcellular location is the cytoplasm. The protein localises to the cytosol. The protein resides in the cell projection. It is found in the axon. It carries out the reaction an aldehyde + NAD(+) + H2O = a carboxylate + NADH + 2 H(+). It catalyses the reaction all-trans-retinal + NAD(+) + H2O = all-trans-retinoate + NADH + 2 H(+). The catalysed reaction is 9-cis-retinal + NAD(+) + H2O = 9-cis-retinoate + NADH + 2 H(+). The enzyme catalyses 11-cis-retinal + NAD(+) + H2O = 11-cis-retinoate + NADH + 2 H(+). It carries out the reaction 13-cis-retinal + NAD(+) + H2O = 13-cis-retinoate + NADH + 2 H(+). It catalyses the reaction 4-aminobutanal + NAD(+) + H2O = 4-aminobutanoate + NADH + 2 H(+). The catalysed reaction is 3-deoxyglucosone + NAD(+) + H2O = 2-dehydro-3-deoxy-D-gluconate + NADH + 2 H(+). The enzyme catalyses (E)-4-hydroxynon-2-enal + NAD(+) + H2O = (E)-4-hydroxynon-2-enoate + NADH + 2 H(+). It carries out the reaction malonaldehyde + NAD(+) + H2O = 3-oxopropanoate + NADH + 2 H(+). It catalyses the reaction hexanal + NAD(+) + H2O = hexanoate + NADH + 2 H(+). The catalysed reaction is propanal + NAD(+) + H2O = propanoate + NADH + 2 H(+). The enzyme catalyses acetaldehyde + NAD(+) + H2O = acetate + NADH + 2 H(+). It carries out the reaction benzaldehyde + NAD(+) + H2O = benzoate + NADH + 2 H(+). The protein operates within cofactor metabolism; retinol metabolism. Its activity is regulated as follows. The aminobutyraldehyde dehydrogenase activity is negatively regulated by ethanol in vivo. Functionally, cytosolic dehydrogenase that catalyzes the irreversible oxidation of a wide range of aldehydes to their corresponding carboxylic acid. Functions downstream of retinol dehydrogenases and catalyzes the oxidation of retinaldehyde into retinoic acid, the second step in the oxidation of retinol/vitamin A into retinoic acid. This pathway is crucial to control the levels of retinol and retinoic acid, two important molecules which excess can be teratogenic and cytotoxic. Also oxidizes aldehydes resulting from lipid peroxidation like (E)-4-hydroxynon-2-enal/HNE, malonaldehyde and hexanal that form protein adducts and are highly cytotoxic. By participating for instance to the clearance of (E)-4-hydroxynon-2-enal/HNE in the lens epithelium prevents the formation of HNE-protein adducts and lens opacification. Also functions downstream of fructosamine-3-kinase in the fructosamine degradation pathway by catalyzing the oxidation of 3-deoxyglucosone, the carbohydrate product of fructosamine 3-phosphate decomposition, which is itself a potent glycating agent that may react with lysine and arginine side-chains of proteins. Also has an aminobutyraldehyde dehydrogenase activity and is probably part of an alternative pathway for the biosynthesis of GABA/4-aminobutanoate in midbrain, thereby playing a role in GABAergic synaptic transmission. The protein is Aldehyde dehydrogenase 1A1 of Mus musculus (Mouse).